The following is a 530-amino-acid chain: Copine-B (530 aa).

2 C2 domains span residues 1 to 125 (MTTP…SEIK) and 130 to 253 (ETGV…PLIN). Ca(2+)-binding residues include D25, D31, D85, D87, and D100. Positions 294–513 (NLMVAIDCTA…ETLREIPQQL (220 aa)) constitute a VWFA domain.

It belongs to the copine family. Requires Ca(2+) as cofactor.

The sequence is that of Copine-B (cpnB-1) from Dictyostelium discoideum (Social amoeba).